The primary structure comprises 95 residues: Immunogenic miracidial antigen 8C (95 aa).

Residues 1 to 15 (EFTISFSSPVISTGQ) are compositionally biased toward polar residues. Positions 1-95 (EFTISFSSPV…PKKYGSGHKY (95 aa)) are disordered. The span at 20-41 (GDEDYHDGDDDVDYTDDVDDVD) shows a compositional bias: acidic residues. Positions 45-59 (GSPSQLLQGGYQRNQ) are enriched in polar residues.

It belongs to the immunogenic miracidial antigen family.

The polypeptide is Immunogenic miracidial antigen 8C (8C) (Schistosoma japonicum (Blood fluke)).